Here is a 302-residue protein sequence, read N- to C-terminus: GTPase Era (302 aa).

Positions 4–171 (KAGFVALVGR…KEKIVSLLPE (168 aa)) constitute an Era-type G domain. The segment at 12–19 (GRTNVGKS) is G1. 12–19 (GRTNVGKS) is a GTP binding site. Residues 38 to 42 (QTTRN) form a G2 region. The G3 stretch occupies residues 59–62 (DTPG). GTP contacts are provided by residues 59–63 (DTPGI) and 121–124 (NKID). Residues 121-124 (NKID) are G4. The G5 stretch occupies residues 150-152 (ISA). Residues 202 to 280 (LEEEVPHGVY…FLDLWVKTRK (79 aa)) form the KH type-2 domain.

Belongs to the TRAFAC class TrmE-Era-EngA-EngB-Septin-like GTPase superfamily. Era GTPase family. Monomer.

The protein resides in the cytoplasm. It localises to the cell membrane. An essential GTPase that binds both GDP and GTP, with rapid nucleotide exchange. Plays a role in 16S rRNA processing and 30S ribosomal subunit biogenesis and possibly also in cell cycle regulation and energy metabolism. This is GTPase Era from Thermoanaerobacter pseudethanolicus (strain ATCC 33223 / 39E) (Clostridium thermohydrosulfuricum).